Consider the following 159-residue polypeptide: Nucleotide-binding protein Avin_13410 (159 aa).

It belongs to the YajQ family.

Its function is as follows. Nucleotide-binding protein. This Azotobacter vinelandii (strain DJ / ATCC BAA-1303) protein is Nucleotide-binding protein Avin_13410.